The following is a 133-amino-acid chain: C-C motif chemokine 21b (133 aa).

A signal peptide spans 1–23 (MAQMMTLSLLSLVLALCIPWTQG). 3 disulfide bridges follow: cysteine 31/cysteine 57, cysteine 32/cysteine 75, and cysteine 103/cysteine 122. The interval 87–133 (MRRLDQPPAPGKQSPGCRKNRGTSKSGKKGKGSKGCKRTEQTQPSRG) is disordered. Residues 98 to 133 (KQSPGCRKNRGTSKSGKKGKGSKGCKRTEQTQPSRG) are C-terminal basic extension. A compositionally biased stretch (basic residues) spans 104-122 (RKNRGTSKSGKKGKGSKGC).

The protein belongs to the intercrine beta (chemokine CC) family. In terms of assembly, binds to CCR7 and to CXCR3. Interacts with PDPN; relocalizes PDPN to the basolateral membrane. Interacts with GPR174. In terms of tissue distribution, expressed strongly in lung, spleen, thymus, peripheral and mesentric lymph nodes. Also expressed in the testis, kidney, liver, and heart.

It localises to the secreted. Its function is as follows. Inhibits hemopoiesis and stimulates chemotaxis. Chemotactic in vitro for thymocytes and activated T-cells, but not for B-cells, macrophages, or neutrophils. Potent mesangial cell chemoattractant. Shows preferential activity towards naive T-cells. May play a role in mediating homing of lymphocytes to secondary lymphoid organs. This Mus musculus (Mouse) protein is C-C motif chemokine 21b (Ccl21b).